The chain runs to 488 residues: Surface lipoprotein assembly modifier 1 (488 aa).

Positions 1-31 are cleaved as a signal peptide; sequence MVIFYFCGKTFMPARNRWMLLLPLLASAAYA. Positions 32–202 are N-terminal domain; sequence EETPREPDLR…LYRKALRERD (171 aa). TPR repeat units lie at residues 118–151 and 171–204; these read MLAL…QPDA and AADQ…RDAW. A C-terminal probable beta barrel, partially restores export of lipoproteins region spans residues 203 to 488; it reads AWKVNGGFSV…RAFVEFNKTF (286 aa). 14 consecutive transmembrane segments (beta stranded) span residues 204 to 214, 241 to 252, 257 to 267, 280 to 291, 294 to 304, 316 to 325, 330 to 340, 354 to 364, 368 to 377, 393 to 402, 407 to 417, 439 to 448, 455 to 464, and 478 to 488; these read WKVNGGFSVTR, VNYRLGAEKKWS, WYTTAGGDVSG, TAGVSGGIGFAD, KDAGLAVFHER, NGARLYFNRW, WQTLSSAEWGR, LQISNSLVFYR, QYWMGGLDFY, GLRFAWGQEW, LSSLLRLGAAK, LNTSLSLWHR, ITPRLTLSHR, and NRAFVEFNKTF.

This sequence belongs to the Slam family. In terms of assembly, interacts with the C-terminal domain of surface lipoprotein TbpB.

The protein resides in the cell outer membrane. Its function is as follows. Required for correct export to the cell surface of some cell outer membrane lipoproteins both in Neisseria and heterologously in E.coli. This chain is Surface lipoprotein assembly modifier 1, found in Neisseria meningitidis serogroup B (strain ATCC BAA-335 / MC58).